The following is a 161-amino-acid chain: MPSFDVVSELDKHEVQNAVDNAIKDLDRRYDLKGKGTFEFKDKEQTVLLTAEEEFQLEAMLEILRLALVKRKIDVKCLETKDPYASGKEKKQEAKFREGIDKDLAKKIVATIKDGKLKVQAAIQGEQVRVTGKKRDDLQEAIALLRTKEFDMPLQFNNFRD.

Belongs to the YajQ family.

Its function is as follows. Nucleotide-binding protein. This chain is Nucleotide-binding protein PSEEN4469, found in Pseudomonas entomophila (strain L48).